The chain runs to 201 residues: Casparian strip membrane protein 2 (201 aa).

At 1–38 the chain is on the cytoplasmic side; sequence MKSTGEATAINIGETKSASATTVATTKAIQHPKAGLKR. The chain crosses the membrane as a helical span at residues 39–59; it reads GLAIFDFILRLSAIGAALAAT. Over 60 to 89 the chain is Extracellular; it reads TTMGTTDQTLPFFTQFFQFQASYDDLPAFS. Residues 90–110 form a helical membrane-spanning segment; that stretch reads FFVIANAIASGYLFLSLPFSI. At 111–129 the chain is on the cytoplasmic side; it reads VCIVRPHAMGARLLLVICD. A helical membrane pass occupies residues 130–150; the sequence is TVMVALTIAAAAAAAAIVYLA. Residues 151 to 175 lie on the Extracellular side of the membrane; that stretch reads HNGNSNANWVAICQQFDDFCQSVSG. The chain crosses the membrane as a helical span at residues 176 to 196; it reads AVVASFIAAVLFMLMIVLSAF. Topologically, residues 197–201 are cytoplasmic; sequence SLRKH.

This sequence belongs to the Casparian strip membrane proteins (CASP) family. In terms of assembly, homodimer and heterodimers.

It is found in the cell membrane. Its function is as follows. Regulates membrane-cell wall junctions and localized cell wall deposition. Required for establishment of the Casparian strip membrane domain (CSD) and the subsequent formation of Casparian strips, a cell wall modification of the root endodermis that determines an apoplastic barrier between the intraorganismal apoplasm and the extraorganismal apoplasm and prevents lateral diffusion. The chain is Casparian strip membrane protein 2 from Vitis vinifera (Grape).